A 193-amino-acid chain; its full sequence is Cilia- and flagella-associated protein 20 (193 aa).

The protein belongs to the CFAP20 family. In terms of assembly, microtubule inner protein component of sperm flagellar doublet microtubules.

It localises to the nucleus. The protein resides in the cytoplasm. It is found in the cytoskeleton. The protein localises to the microtubule organizing center. Its subcellular location is the centrosome. It localises to the centriole. The protein resides in the cilium basal body. It is found in the cilium axoneme. The protein localises to the flagellum axoneme. Its function is as follows. Cilium- and flagellum-specific protein that plays a role in axonemal structure organization and motility. Microtubule inner protein (MIP) part of the dynein-decorated doublet microtubules (DMTs) in cilia axoneme, which is required for motile cilia beating. Involved in the regulation of the size and morphology of cilia. Required for axonemal microtubules polyglutamylation. The chain is Cilia- and flagella-associated protein 20 from Homo sapiens (Human).